The chain runs to 1856 residues: Autophagy-related protein 2 (1856 aa).

Disordered regions lie at residues 123-167 (NTND…TGNK), 229-283 (LRTL…GNES), 309-328 (KSAA…DKED), 395-428 (TKSR…DASH), 1157-1177 (LNGT…SSLM), 1614-1647 (MLGG…VEVA), and 1719-1741 (KLQP…EDED). Residues 137-147 (ASEDDDEDDID) show a composition bias toward acidic residues. Polar residues predominate over residues 250-262 (KKQQGSDNDSPTD). Acidic residues predominate over residues 270–280 (NDNDDDDDDYG). The segment covering 412–424 (DNDEIPEDQSESD) has biased composition (acidic residues). Over residues 1157–1170 (LNGTENGSTSESSS) the composition is skewed to low complexity. A compositionally biased stretch (polar residues) spans 1621–1639 (SVRSPNLGGSDNRRNSNAS). Residues 1732–1741 (TEEEEDEDED) are compositionally biased toward acidic residues.

The protein belongs to the ATG2 family.

The protein resides in the preautophagosomal structure membrane. The protein localises to the endoplasmic reticulum membrane. It carries out the reaction a 1,2-diacyl-sn-glycero-3-phosphocholine(in) = a 1,2-diacyl-sn-glycero-3-phosphocholine(out). The enzyme catalyses a 1,2-diacyl-sn-glycero-3-phospho-L-serine(in) = a 1,2-diacyl-sn-glycero-3-phospho-L-serine(out). It catalyses the reaction a 1,2-diacyl-sn-glycero-3-phosphoethanolamine(in) = a 1,2-diacyl-sn-glycero-3-phosphoethanolamine(out). Lipid transfer protein required for autophagosome completion and peroxisome degradation. Tethers the edge of the isolation membrane (IM) to the endoplasmic reticulum (ER) and mediates direct lipid transfer from ER to IM for IM expansion. ATG2/SPO72 binds to the ER exit site (ERES), which is the membrane source for autophagosome formation, using basic residues in its N-terminal region (NR) and to the expanding edge of the IM through its C-terminal region. The latter binding is assisted by an ATG18-PtdIns3P interaction. ATG2/SPO72 then extracts phospholipids from the membrane source using its NR and transfers them to ATG9 to the IM through its predicted beta-sheet-rich structure for membrane expansion. In Candida albicans (strain SC5314 / ATCC MYA-2876) (Yeast), this protein is Autophagy-related protein 2 (SPO72).